Here is a 229-residue protein sequence, read N- to C-terminus: Glutamine amidotransferase-like class 1 domain-containing protein 1 (229 aa).

The first 34 residues, 1 to 34 (MKKQGAPVSGGGTERLTKPSCLMVGSAVAEGVSA), serve as a signal peptide directing secretion. 2 N-linked (GlcNAc...) asparagine glycosylation sites follow: asparagine 154 and asparagine 212.

The protein belongs to the peptidase C56 family. As to quaternary structure, homotetramer. Component of the FERRY complex.

It localises to the secreted. It is found in the early endosome. In terms of biological role, component of the FERRY complex (Five-subunit Endosomal Rab5 and RNA/ribosome intermediary). The FERRY complex directly interacts with mRNAs and RAB5A, and functions as a RAB5A effector involved in the localization and the distribution of specific mRNAs most likely by mediating their endosomal transport. The complex recruits mRNAs and ribosomes to early endosomes through direct mRNA-interaction. This chain is Glutamine amidotransferase-like class 1 domain-containing protein 1, found in Xenopus laevis (African clawed frog).